Reading from the N-terminus, the 289-residue chain is RING-H2 finger protein ATL29 (289 aa).

Residues 25–45 form a helical membrane-spanning segment; that stretch reads VILTVILLVFFFIGFFTLYFC. The RING-type; atypical zinc-finger motif lies at 110 to 152; it reads CAICLLEFDGDHVLRLLTTCYHVFHQECIDLWFESHRTCPVCR. Residues 179–237 are disordered; sequence TSDDEEDDHHRQQTTTQIDTWPSSGQTSSIKKEQNLPEKFSRSHSTGHSIVRNKPEEED. Over residues 191-207 the composition is skewed to polar residues; it reads QTTTQIDTWPSSGQTSS. A compositionally biased stretch (basic and acidic residues) spans 208–219; that stretch reads IKKEQNLPEKFS.

The protein belongs to the RING-type zinc finger family. ATL subfamily.

Its subcellular location is the membrane. It catalyses the reaction S-ubiquitinyl-[E2 ubiquitin-conjugating enzyme]-L-cysteine + [acceptor protein]-L-lysine = [E2 ubiquitin-conjugating enzyme]-L-cysteine + N(6)-ubiquitinyl-[acceptor protein]-L-lysine.. Its pathway is protein modification; protein ubiquitination. The polypeptide is RING-H2 finger protein ATL29 (ATL29) (Arabidopsis thaliana (Mouse-ear cress)).